The sequence spans 250 residues: 3alpha-hydroxysteroid dehydrogenase (250 aa).

3 residues coordinate NADP(+): N93, Y158, and K162. Catalysis depends on Y158, which acts as the Proton acceptor.

The protein belongs to the short-chain dehydrogenases/reductases (SDR) family.

The catalysed reaction is lithocholate + NADP(+) = 3-oxo-5beta-cholan-24-oate + NADPH + H(+). The enzyme catalyses deoxycholate + NADP(+) = 12alpha-hydroxy-3-oxo-5beta-cholan-24-oate + NADPH + H(+). It catalyses the reaction deoxycholate + NAD(+) = 12alpha-hydroxy-3-oxo-5beta-cholan-24-oate + NADH + H(+). It carries out the reaction cholate + NADP(+) = 7alpha,12alpha-dihydroxy-3-oxo-5beta-cholan-24-oate + NADPH + H(+). The catalysed reaction is chenodeoxycholate + NADP(+) = 3-oxochenodeoxycholate + NADPH + H(+). Involved in the modification of secondary bile acids into iso-bile acids (3beta-bile acids) via epimerization of the 3-OH group through a 3-oxo-intermediate. Catalyzes the oxidation of deoxycholate (DCA) and lithocholate (LCA) to yield 12-alpha-hydroxy-3-oxo-5-beta-cholan-24-oate (3-oxo-DCA) and 3-oxo-5-beta-cholan-24-oate (3-oxo-LCA), respectively. Is also able to catalyze the oxidation of cholate (CA) and chenodeoxycholate (CDCA) into 3-dehydrocholate (3-oxo-CA) and 7-alpha-hydroxy-3-oxo-5-beta-cholan-24-oate (3-oxo-CDCA), respectively. Can also catalyze the reverse reactions in vitro. Accepts both NADPH and NADH as cosubstrates. The conversion of the abundant bile acid DCA into isoDCA by the gut bacterium R.gnavus favors the growth of the keystone commensal genus Bacteroides, since isoDCA is less cytotoxic than its parent compound, DCA; iso-bile acids have thus a potential role in modulating gut community composition. This Mediterraneibacter gnavus (strain ATCC 29149 / DSM 114966 / JCM 6515 / VPI C7-9) (Ruminococcus gnavus) protein is 3alpha-hydroxysteroid dehydrogenase.